Here is a 184-residue protein sequence, read N- to C-terminus: ATP synthase subunit b, chloroplastic (184 aa).

A helical transmembrane segment spans residues 27–49 (LATNPINLSVVLGVLIFFGKGVL).

Belongs to the ATPase B chain family. F-type ATPases have 2 components, F(1) - the catalytic core - and F(0) - the membrane proton channel. F(1) has five subunits: alpha(3), beta(3), gamma(1), delta(1), epsilon(1). F(0) has four main subunits: a(1), b(1), b'(1) and c(10-14). The alpha and beta chains form an alternating ring which encloses part of the gamma chain. F(1) is attached to F(0) by a central stalk formed by the gamma and epsilon chains, while a peripheral stalk is formed by the delta, b and b' chains.

The protein localises to the plastid. Its subcellular location is the chloroplast thylakoid membrane. Its function is as follows. F(1)F(0) ATP synthase produces ATP from ADP in the presence of a proton or sodium gradient. F-type ATPases consist of two structural domains, F(1) containing the extramembraneous catalytic core and F(0) containing the membrane proton channel, linked together by a central stalk and a peripheral stalk. During catalysis, ATP synthesis in the catalytic domain of F(1) is coupled via a rotary mechanism of the central stalk subunits to proton translocation. Component of the F(0) channel, it forms part of the peripheral stalk, linking F(1) to F(0). The protein is ATP synthase subunit b, chloroplastic of Ceratophyllum demersum (Rigid hornwort).